Here is a 356-residue protein sequence, read N- to C-terminus: Methionine import ATP-binding protein MetN 1 (356 aa).

Positions 15–254 (IQIRALNKTY…PVQPITQELL (240 aa)) constitute an ABC transporter domain. 51 to 58 (GKSGAGKS) is an ATP binding site.

Belongs to the ABC transporter superfamily. Methionine importer (TC 3.A.1.24) family. The complex is composed of two ATP-binding proteins (MetN), two transmembrane proteins (MetI) and a solute-binding protein (MetQ).

The protein resides in the cell inner membrane. The catalysed reaction is L-methionine(out) + ATP + H2O = L-methionine(in) + ADP + phosphate + H(+). It catalyses the reaction D-methionine(out) + ATP + H2O = D-methionine(in) + ADP + phosphate + H(+). In terms of biological role, part of the ABC transporter complex MetNIQ involved in methionine import. Responsible for energy coupling to the transport system. This Acinetobacter baylyi (strain ATCC 33305 / BD413 / ADP1) protein is Methionine import ATP-binding protein MetN 1.